The primary structure comprises 53 residues: uncharacterized protein (53 aa).

A disordered region spans residues 34 to 53 (RKEKGKRHAAPLSLMGVHKR).

This is an uncharacterized protein from Treponema pallidum (strain Nichols).